Consider the following 244-residue polypeptide: Putative ABC transporter ATP-binding protein gll0289 (244 aa).

One can recognise an ABC transporter domain in the interval 5–237 (LVVEELHYSY…RVLLETHGLE (233 aa)). 38–45 (GPNGSGKS) contributes to the ATP binding site.

The protein belongs to the ABC transporter superfamily.

The protein localises to the cell inner membrane. Its function is as follows. Probably part of an ABC transporter complex. Responsible for energy coupling to the transport system. This Gloeobacter violaceus (strain ATCC 29082 / PCC 7421) protein is Putative ABC transporter ATP-binding protein gll0289.